The primary structure comprises 239 residues: Ribonuclease PH (239 aa).

Phosphate contacts are provided by residues R87 and 125-127 (GTR).

This sequence belongs to the RNase PH family. In terms of assembly, homohexameric ring arranged as a trimer of dimers.

The enzyme catalyses tRNA(n+1) + phosphate = tRNA(n) + a ribonucleoside 5'-diphosphate. Phosphorolytic 3'-5' exoribonuclease that plays an important role in tRNA 3'-end maturation. Removes nucleotide residues following the 3'-CCA terminus of tRNAs; can also add nucleotides to the ends of RNA molecules by using nucleoside diphosphates as substrates, but this may not be physiologically important. Probably plays a role in initiation of 16S rRNA degradation (leading to ribosome degradation) during starvation. The protein is Ribonuclease PH of Acaryochloris marina (strain MBIC 11017).